The chain runs to 222 residues: ATP synthase F(0) complex subunit a (222 aa).

The next 6 helical transmembrane spans lie at 8–28, 64–84, 93–113, 127–147, 160–180, and 197–219; these read FFYV…ILLP, WSLM…LGLL, QLTV…VPGF, QGTP…SLLI, ITAG…LSSI, and ILEL…LYLH.

This sequence belongs to the ATPase A chain family. In terms of assembly, component of the ATP synthase complex composed at least of ATP5F1A/subunit alpha, ATP5F1B/subunit beta, ATP5MC1/subunit c (homooctomer), MT-ATP6/subunit a, MT-ATP8/subunit 8, ATP5ME/subunit e, ATP5MF/subunit f, ATP5MG/subunit g, ATP5MK/subunit k, ATP5MJ/subunit j, ATP5F1C/subunit gamma, ATP5F1D/subunit delta, ATP5F1E/subunit epsilon, ATP5PF/subunit F6, ATP5PB/subunit b, ATP5PD/subunit d, ATP5PO/subunit OSCP. ATP synthase complex consists of a soluble F(1) head domain (subunits alpha(3) and beta(3)) - the catalytic core - and a membrane F(0) domain - the membrane proton channel (subunits c, a, 8, e, f, g, k and j). These two domains are linked by a central stalk (subunits gamma, delta, and epsilon) rotating inside the F1 region and a stationary peripheral stalk (subunits F6, b, d, and OSCP). Interacts with DNAJC30; interaction is direct.

The protein localises to the mitochondrion inner membrane. The enzyme catalyses H(+)(in) = H(+)(out). Functionally, subunit a, of the mitochondrial membrane ATP synthase complex (F(1)F(0) ATP synthase or Complex V) that produces ATP from ADP in the presence of a proton gradient across the membrane which is generated by electron transport complexes of the respiratory chain. ATP synthase complex consist of a soluble F(1) head domain - the catalytic core - and a membrane F(1) domain - the membrane proton channel. These two domains are linked by a central stalk rotating inside the F(1) region and a stationary peripheral stalk. During catalysis, ATP synthesis in the catalytic domain of F(1) is coupled via a rotary mechanism of the central stalk subunits to proton translocation. With the subunit c (ATP5MC1), forms the proton-conducting channel in the F(0) domain, that contains two crucial half-channels (inlet and outlet) that facilitate proton movement from the mitochondrial intermembrane space (IMS) into the matrix. Protons are taken up via the inlet half-channel and released through the outlet half-channel, following a Grotthuss mechanism. The protein is ATP synthase F(0) complex subunit a of Loxodonta africana (African elephant).